Consider the following 235-residue polypeptide: Ribonuclease 3 (235 aa).

Residues 6-131 form the RNase III domain; it reads IDQLFKLTGH…LIAVMYLDGG (126 aa). Glu44 is a Mg(2+) binding site. Asp48 is a catalytic residue. Positions 117 and 120 each coordinate Mg(2+). Glu120 is a catalytic residue. Residues 156-225 enclose the DRBM domain; the sequence is DAKTELQEWA…AEKILRREGV (70 aa).

Belongs to the ribonuclease III family. As to quaternary structure, homodimer. The cofactor is Mg(2+).

The protein localises to the cytoplasm. It catalyses the reaction Endonucleolytic cleavage to 5'-phosphomonoester.. Functionally, digests double-stranded RNA. Involved in the processing of primary rRNA transcript to yield the immediate precursors to the large and small rRNAs (23S and 16S). Processes some mRNAs, and tRNAs when they are encoded in the rRNA operon. Processes pre-crRNA and tracrRNA of type II CRISPR loci if present in the organism. The chain is Ribonuclease 3 from Bartonella tribocorum (strain CIP 105476 / IBS 506).